Here is a 229-residue protein sequence, read N- to C-terminus: Phosphoglycolate phosphatase (229 aa).

Residue aspartate 18 is the Nucleophile of the active site. Mg(2+)-binding residues include aspartate 18, aspartate 20, and aspartate 176.

Belongs to the HAD-like hydrolase superfamily. CbbY/CbbZ/Gph/YieH family. The cofactor is Mg(2+).

It carries out the reaction 2-phosphoglycolate + H2O = glycolate + phosphate. It participates in organic acid metabolism; glycolate biosynthesis; glycolate from 2-phosphoglycolate: step 1/1. Its function is as follows. Specifically catalyzes the dephosphorylation of 2-phosphoglycolate. Is involved in the dissimilation of the intracellular 2-phosphoglycolate formed during the DNA repair of 3'-phosphoglycolate ends, a major class of DNA lesions induced by oxidative stress. This chain is Phosphoglycolate phosphatase, found in Xylella fastidiosa (strain 9a5c).